The primary structure comprises 149 residues: uncharacterized protein (149 aa).

This is an uncharacterized protein from Homo sapiens (Human).